Here is a 259-residue protein sequence, read N- to C-terminus: Energy-coupling factor transporter ATP-binding protein EcfA1 (259 aa).

Residues 3–230 (ITLNSVSFRY…EFDDVEIPFK (228 aa)) form the ABC transporter domain. 38-43 (GSGKTT) provides a ligand contact to ATP. The active-site Proton acceptor is Glu-157.

The protein belongs to the ABC transporter superfamily. Energy-coupling factor EcfA family. In terms of assembly, forms a heterodimer with EcfA2. Forms a stable energy-coupling factor (ECF) transporter complex composed of 2 membrane-embedded substrate-binding proteins (S component, RibU, BioY), 2 ATP-binding proteins (A component) and 2 transmembrane proteins (T component) upon coexpression in E.coli. Stable subcomplexes with both A plus T components can also be isolated. This complex interacts with at least 2 substrate-specific components, BioY and RibU.

The protein resides in the cell inner membrane. In terms of biological role, ATP-binding (A) component of a common energy-coupling factor (ECF) ABC-transporter complex. Unlike classic ABC transporters this ECF transporter provides the energy necessary to transport a number of different substrates. Expression of the complex plus RibU in E.coli allows riboflavin uptake; uptake does not occur in the absence of RibU or the EcfA1A2T complex. This chain is Energy-coupling factor transporter ATP-binding protein EcfA1, found in Thermotoga maritima (strain ATCC 43589 / DSM 3109 / JCM 10099 / NBRC 100826 / MSB8).